The sequence spans 658 residues: DNA-binding protein Rfx5 (658 aa).

Over residues 1 to 10 (MAEDKPDAKS) the composition is skewed to basic and acidic residues. The segment at 1–28 (MAEDKPDAKSPKTGARPQGGADAGEPTT) is disordered. At Ala2 the chain carries N-acetylalanine. Ser10 bears the Phosphoserine mark. The interval 24-89 (GEPTTLLQRL…PSLLSNEEYM (66 aa)) is N-terminal domain. Residues 61–65 (LYLYL) are leucine-rich region; critical for dimer formation and for interaction with RFXAP. The segment at residues 91–167 (AYRWIRNHLE…YCYSGIRRKT (77 aa)) is a DNA-binding region (RFX-type winged-helix). The PxLPxI/L motif; mediates interaction with RFXANK signature appears at 172–177 (PPLPGL). Residue Ser184 is modified to Phosphoserine. Disordered regions lie at residues 250–315 (LAEE…SSVP), 382–422 (AGPG…GLGA), 443–602 (VPPR…DKIP), and 624–658 (KGEA…ATPP). A compositionally biased stretch (basic and acidic residues) spans 277–309 (GPKKPERPAQPPKEQEARAGTDLPGRAERKKSV). Gly residues-rich tracts occupy residues 382-398 (AGPG…GPGP) and 406-422 (PGLG…GLGA). Basic and acidic residues-rich tracts occupy residues 465–476 (PRPHDKGIKRTA) and 489–498 (PVKEMKHETQ). Basic residues predominate over residues 506-516 (KRKRGRPRKKP). A compositionally biased stretch (basic and acidic residues) spans 648–658 (PEHKDPKATPP).

The protein belongs to the RFX family. In terms of assembly, homodimer. The RFX heterotetrameric complex consists of 2 molecules of RFX5 and one each of RFXAP and RFX-B/RFXANK; with each subunit representing a separate complementation group. Interacts (via PxLPxI/L motif) with RFXANK (via ankyrin repeats); the interaction is direct. RFX forms cooperative DNA binding complexes with X2BP and CBF/NF-Y. RFX associates with CIITA to form an active transcriptional complex. In terms of processing, phosphorylated.

The protein localises to the nucleus. Its function is as follows. Activates transcription from class II MHC promoters. Recognizes X-boxes. Mediates cooperative binding between RFX and NF-Y. RFX binds the X1 box of MHC-II promoters. In Mus musculus (Mouse), this protein is DNA-binding protein Rfx5 (Rfx5).